The chain runs to 514 residues: 1-pyrroline-5-carboxylate dehydrogenase (514 aa).

Residues Glu286 and Cys320 contribute to the active site.

It belongs to the aldehyde dehydrogenase family. RocA subfamily.

It catalyses the reaction L-glutamate 5-semialdehyde + NAD(+) + H2O = L-glutamate + NADH + 2 H(+). Its pathway is amino-acid degradation; L-proline degradation into L-glutamate; L-glutamate from L-proline: step 2/2. The polypeptide is 1-pyrroline-5-carboxylate dehydrogenase (Staphylococcus haemolyticus (strain JCSC1435)).